We begin with the raw amino-acid sequence, 193 residues long: Nucleoside triphosphate pyrophosphatase (193 aa).

Aspartate 70 acts as the Proton acceptor in catalysis.

Belongs to the Maf family. Requires a divalent metal cation as cofactor.

It is found in the cytoplasm. The enzyme catalyses a ribonucleoside 5'-triphosphate + H2O = a ribonucleoside 5'-phosphate + diphosphate + H(+). The catalysed reaction is a 2'-deoxyribonucleoside 5'-triphosphate + H2O = a 2'-deoxyribonucleoside 5'-phosphate + diphosphate + H(+). In terms of biological role, nucleoside triphosphate pyrophosphatase. May have a dual role in cell division arrest and in preventing the incorporation of modified nucleotides into cellular nucleic acids. This Anaplasma phagocytophilum (strain HZ) protein is Nucleoside triphosphate pyrophosphatase.